Reading from the N-terminus, the 243-residue chain is Ribonuclease PH (243 aa).

Phosphate-binding positions include arginine 91 and 129–131; that span reads GTR.

It belongs to the RNase PH family. In terms of assembly, homohexameric ring arranged as a trimer of dimers.

The catalysed reaction is tRNA(n+1) + phosphate = tRNA(n) + a ribonucleoside 5'-diphosphate. Functionally, phosphorolytic 3'-5' exoribonuclease that plays an important role in tRNA 3'-end maturation. Removes nucleotide residues following the 3'-CCA terminus of tRNAs; can also add nucleotides to the ends of RNA molecules by using nucleoside diphosphates as substrates, but this may not be physiologically important. Probably plays a role in initiation of 16S rRNA degradation (leading to ribosome degradation) during starvation. This chain is Ribonuclease PH, found in Burkholderia mallei (strain NCTC 10247).